The chain runs to 548 residues: Biotin-dependent acetyl-/propionyl-coenzyme A carboxylase beta5 subunit (548 aa).

The disordered stretch occupies residues 1–23 (MTSVTDRSAHSAERSTEHTIDIH). The segment covering 7–21 (RSAHSAERSTEHTID) has biased composition (basic and acidic residues). The CoA carboxyltransferase N-terminal domain maps to 25–281 (TAGKLAELHK…NNSTDAPRYQ (257 aa)). Residues 295–541 (DEDLELDTLI…ERKIAQLPPK (247 aa)) enclose the CoA carboxyltransferase C-terminal domain.

The protein belongs to the AccD/PCCB family. The biotin-dependent acyl-CoA carboxylase complex is composed of AccA3, which contains the biotin carboxylase (BC) and biotin carboxyl carrier protein (BCCP) domains, and AccD5, which contains the carboxyl transferase (CT) domain.

The enzyme catalyses N(6)-carboxybiotinyl-L-lysyl-[protein] + acetyl-CoA = N(6)-biotinyl-L-lysyl-[protein] + malonyl-CoA. The catalysed reaction is N(6)-carboxybiotinyl-L-lysyl-[protein] + propanoyl-CoA = methylmalonyl-CoA + N(6)-biotinyl-L-lysyl-[protein]. It functions in the pathway lipid metabolism; mycolic acid biosynthesis. Its function is as follows. Component of a biotin-dependent acyl-CoA carboxylase complex. This subunit transfers the CO2 from carboxybiotin to the CoA ester substrate. When associated with the alpha3 subunit AccA3, is involved in the carboxylation of acetyl-CoA and propionyl-CoA. The chain is Biotin-dependent acetyl-/propionyl-coenzyme A carboxylase beta5 subunit (accD5) from Mycobacterium tuberculosis (strain CDC 1551 / Oshkosh).